A 78-amino-acid polypeptide reads, in one-letter code: D-alanyl carrier protein (78 aa).

Residues 1-78 enclose the Carrier domain; sequence MAFRENVLEI…MIITQLEALK (78 aa). Position 36 is an O-(pantetheine 4'-phosphoryl)serine (Ser-36).

The protein belongs to the DltC family. In terms of processing, 4'-phosphopantetheine is transferred from CoA to a specific serine of apo-DCP.

The protein resides in the cytoplasm. It participates in cell wall biogenesis; lipoteichoic acid biosynthesis. Its function is as follows. Carrier protein involved in the D-alanylation of lipoteichoic acid (LTA). The loading of thioester-linked D-alanine onto DltC is catalyzed by D-alanine--D-alanyl carrier protein ligase DltA. The DltC-carried D-alanyl group is further transferred to cell membrane phosphatidylglycerol (PG) by forming an ester bond, probably catalyzed by DltD. D-alanylation of LTA plays an important role in modulating the properties of the cell wall in Gram-positive bacteria, influencing the net charge of the cell wall. The protein is D-alanyl carrier protein of Listeria welshimeri serovar 6b (strain ATCC 35897 / DSM 20650 / CCUG 15529 / CIP 8149 / NCTC 11857 / SLCC 5334 / V8).